We begin with the raw amino-acid sequence, 394 residues long: Tubulin-like protein CetZ4 (394 aa).

GTP is bound by residues 10–14, 110–112, glutamate 142, asparagine 169, and asparagine 187; these read QAGGK and GTG.

Belongs to the CetZ family.

The protein resides in the cytoplasm. Functionally, involved in cell shape control. The protein is Tubulin-like protein CetZ4 of Haloferax volcanii (strain ATCC 29605 / DSM 3757 / JCM 8879 / NBRC 14742 / NCIMB 2012 / VKM B-1768 / DS2) (Halobacterium volcanii).